We begin with the raw amino-acid sequence, 687 residues long: Glycine--tRNA ligase beta subunit (687 aa).

It belongs to the class-II aminoacyl-tRNA synthetase family. In terms of assembly, tetramer of two alpha and two beta subunits.

It is found in the cytoplasm. The catalysed reaction is tRNA(Gly) + glycine + ATP = glycyl-tRNA(Gly) + AMP + diphosphate. The chain is Glycine--tRNA ligase beta subunit from Neisseria meningitidis serogroup C / serotype 2a (strain ATCC 700532 / DSM 15464 / FAM18).